Here is a 269-residue protein sequence, read N- to C-terminus: Monofunctional glycosyltransferase (269 aa).

The helical transmembrane segment at 46–66 (AIITILILLIIFFGVMYFISS) threads the bilayer.

Belongs to the glycosyltransferase 51 family.

The protein localises to the cell membrane. The catalysed reaction is [GlcNAc-(1-&gt;4)-Mur2Ac(oyl-L-Ala-gamma-D-Glu-L-Lys-D-Ala-D-Ala)](n)-di-trans,octa-cis-undecaprenyl diphosphate + beta-D-GlcNAc-(1-&gt;4)-Mur2Ac(oyl-L-Ala-gamma-D-Glu-L-Lys-D-Ala-D-Ala)-di-trans,octa-cis-undecaprenyl diphosphate = [GlcNAc-(1-&gt;4)-Mur2Ac(oyl-L-Ala-gamma-D-Glu-L-Lys-D-Ala-D-Ala)](n+1)-di-trans,octa-cis-undecaprenyl diphosphate + di-trans,octa-cis-undecaprenyl diphosphate + H(+). It functions in the pathway cell wall biogenesis; peptidoglycan biosynthesis. Peptidoglycan polymerase that catalyzes glycan chain elongation using lipid-linked disaccharide-pentapeptide as the substrate. This Staphylococcus epidermidis (strain ATCC 35984 / DSM 28319 / BCRC 17069 / CCUG 31568 / BM 3577 / RP62A) protein is Monofunctional glycosyltransferase.